Here is a 205-residue protein sequence, read N- to C-terminus: MSHKKQDAFQGLIDALKVLPNVGPKSAQRIAYHLLQHKRKEAEKLVDALQTALKQVDHCARCNTFCEGGLCDICADETRDGRRLMVVHMPADVSNMEAANCHDGLYFVLMGQINTALGMDVSAIALDRLAQRLGGGEVEEIIIATAFTAEGNATAYVLSEFFKNLPYKVSRLSQGIPLGGELEYVDAGTLAQAVYERRLIKEGGA.

The C4-type zinc-finger motif lies at C59 to C74. One can recognise a Toprim domain in the interval R82 to P177.

This sequence belongs to the RecR family.

Its function is as follows. May play a role in DNA repair. It seems to be involved in an RecBC-independent recombinational process of DNA repair. It may act with RecF and RecO. This Neisseria meningitidis serogroup A / serotype 4A (strain DSM 15465 / Z2491) protein is Recombination protein RecR.